Here is a 303-residue protein sequence, read N- to C-terminus: Mitochondrial substrate carrier family protein E (303 aa).

Over 1–8 the chain is Mitochondrial intermembrane; sequence MENKKESS. Solcar repeat units follow at residues 6–93, 104–197, and 210–298; these read ESSL…SKQW, ESTI…CKST, and LPIP…LKYL. The helical transmembrane segment at 9–29 threads the bilayer; sequence LLYILTGATSGLLADSIMHPV. Residues 30-67 lie on the Mitochondrial matrix side of the membrane; sequence DTVRARVQIEKVGKSQYKGTFNALNQIIKNEGVSYLYK. A helical membrane pass occupies residues 68–88; sequence GFPIVATATVPAHALYFLGYE. The Mitochondrial intermembrane segment spans residues 89-109; that stretch reads YSKQWVTDRYGKKWGESTITH. The helical transmembrane segment at 110–130 threads the bilayer; that stretch reads FSAGFVADALGSLIWVPMDII. The Mitochondrial matrix portion of the chain corresponds to 131–171; the sequence is KQRLQVQTNTQKLNPNQTYYKGSFHAGKIILQEEGIRGLYR. A helical transmembrane segment spans residues 172–192; that stretch reads GFMPALATYGPFVGIYFSVYE. Residues 193-215 lie on the Mitochondrial intermembrane side of the membrane; sequence KCKSTISSLLSKEKDQYLPIPYQ. A helical transmembrane segment spans residues 216–236; it reads LGSGFFAGAFAAAVTCPLDVI. Over 237–268 the chain is Mitochondrial matrix; that stretch reads KTRIQVQRSTEKQIYKGMWDSFKTILKEEGPK. Residues 269-289 traverse the membrane as a helical segment; the sequence is AFVKGMGARIWWIAPGNALTI. Topologically, residues 290–303 are mitochondrial intermembrane; the sequence is ASYEQLKYLFKDLI.

This sequence belongs to the mitochondrial carrier (TC 2.A.29) family.

The protein localises to the mitochondrion inner membrane. Mitochondrial solute carriers shuttle metabolites, nucleotides, and cofactors through the mitochondrial inner membrane. This is Mitochondrial substrate carrier family protein E (mcfE) from Dictyostelium discoideum (Social amoeba).